We begin with the raw amino-acid sequence, 245 residues long: Ribonuclease 3 (245 aa).

The region spanning 19 to 148 (FRAFQQKLGI…FIGALYLDQG (130 aa)) is the RNase III domain. E61 is a Mg(2+) binding site. D65 is a catalytic residue. Mg(2+) is bound by residues D134 and E137. Residue E137 is part of the active site. Positions 174–243 (DYKSQLQELI…AAEALRKLKE (70 aa)) constitute a DRBM domain.

It belongs to the ribonuclease III family. In terms of assembly, homodimer. Mg(2+) is required as a cofactor.

Its subcellular location is the cytoplasm. It carries out the reaction Endonucleolytic cleavage to 5'-phosphomonoester.. Its function is as follows. Digests double-stranded RNA. Involved in the processing of primary rRNA transcript to yield the immediate precursors to the large and small rRNAs (23S and 16S). Processes some mRNAs, and tRNAs when they are encoded in the rRNA operon. Processes pre-crRNA and tracrRNA of type II CRISPR loci if present in the organism. The chain is Ribonuclease 3 from Bacillus cytotoxicus (strain DSM 22905 / CIP 110041 / 391-98 / NVH 391-98).